The chain runs to 1439 residues: MDTTAAAALPAFVALLLLSPWPLLGSAQGQFSAGGCTFDDGPGACDYHQDLYDDFEWVHVSAQEPHYLPPEMPQGSYMIVDSSDHDPGEKARLQLPTMKENDTHCIDFSYLLYSQKGLNPGTLNILVRVNKGPLANPIWNVTGFTGRDWLRAELAVSTFWPNEYQVIFEAEVSGGRSGYIAIDDIQVLSYPCDKSPHFLRLGDVEVNAGQNATFQCIATGRDAVHNKLWLQRRNGEDIPVAQTKNINHRRFAASFRLQEVTKTDQDLYRCVTQSERGSGVSNFAQLIVREPPRPIAPPQLLGVGPTYLLIQLNANSIIGDGPIILKEVEYRMTSGSWTETHAVNAPTYKLWHLDPDTEYEIRVLLTRPGEGGTGLPGPPLITRTKCAEPMRTPKTLKIAEIQARRIAVDWESLGYNITRCHTFNVTICYHYFRGHNESKADCLDMDPKAPQHVVNHLPPYTNVSLKMILTNPEGRKESEETIIQTDEDVPGPVPVKSLQGTSFENKIFLNWKEPLDPNGIITQYEISYSSIRSFDPAVPVAGPPQTVSNLWNSTHHVFMHLHPGTTYQFFIRASTVKGFGPATAINVTTNISAPTLPDYEGVDASLNETATTITVLLRPAQAKGAPISAYQIVVEELHPHRTKREAGAMECYQVPVTYQNAMSGGAPYYFAAELPPGNLPEPAPFTVGDNRTYQGFWNPPLAPRKGYNIYFQAMSSVEKETKTQCVRIATKAATEEPEVIPDPAKQTDRVVKIAGISAGILVFILLLLVVILIVKKSKLAKKRKDAMGNTRQEMTHMVNAMDRSYADQSTLHAEDPLSITFMDQHNFSPRYENHSATAESSRLLDVPRYLCEGTESPYQTGQLHPAIRVADLLQHINLMKTSDSYGFKEEYESFFEGQSASWDVAKKDQNRAKNRYGNIIAYDHSRVILQPVEDDPSSDYINANYIDGYQRPSHYIATQGPVHETVYDFWRMIWQEQSACIVMVTNLVEVGRVKCYKYWPDDTEVYGDFKVTCVEMEPLAEYVVRTFTLERRGYNEIREVKQFHFTGWPDHGVPYHATGLLSFIRRVKLSNPPSAGPIVVHCSAGAGRTGCYIVIDIMLDMAEREGVVDIYNCVKALRSRRINMVQTEEQYIFIHDAILEACLCGETAIPVCEFKAAYFDMIRIDSQTNSSHLKDEFQTLNSVTPRLQAEDCSIACLPRNHDKNRFMDMLPPDRCLPFLITIDGESSNYINAALMDSYRQPAAFIVTQYPLPNTVKDFWRLVYDYGCTSIVMLNEVDLSQGCPQYWPEEGMLRYGPIQVECMSCSMDCDVINRIFRICNLTRPQEGYLMVQQFQYLGWASHREVPGSKRSFLKLILQVEKWQEECEEGEGRTIIHCLNGGGRSGMFCAIGIVVEMVKRQNVVDVFHAVKTLRNSKPNMVEAPEQYRFCYDVALEYLESS.

The N-terminal stretch at 1–26 is a signal peptide; sequence MDTTAAAALPAFVALLLLSPWPLLGS. The Extracellular portion of the chain corresponds to 27-752; it reads AQGQFSAGGC…PAKQTDRVVK (726 aa). Positions 31–194 constitute an MAM domain; that stretch reads FSAGGCTFDD…IQVLSYPCDK (164 aa). Asn-101, Asn-140, and Asn-211 each carry an N-linked (GlcNAc...) asparagine glycan. Residues 196–281 form the Ig-like C2-type domain; the sequence is PHFLRLGDVE…TQSERGSGVS (86 aa). The cysteines at positions 216 and 270 are disulfide-linked. Fibronectin type-III domains lie at 294–389, 392–488, 491–595, and 597–680; these read PIAP…CAEP, TPKT…TDED, GPVP…SAPT, and PDYE…GNLP. N-linked (GlcNAc...) asparagine glycosylation is found at Asn-416, Asn-424, Asn-436, Asn-462, Asn-552, Asn-586, Asn-590, Asn-607, and Asn-690. A helical membrane pass occupies residues 753–774; it reads IAGISAGILVFILLLLVVILIV. Over 775–1439 the chain is Cytoplasmic; the sequence is KKSKLAKKRK…DVALEYLESS (665 aa). Ser-856 is modified (phosphoserine). 2 Tyrosine-protein phosphatase domains span residues 887–1141 and 1173–1435; these read FKEE…ILEA and LKDE…ALEY. Residues Asp-1050, 1082–1088, and Gln-1126 contribute to the substrate site; that span reads CSAGAGR. The active-site Phosphocysteine intermediate is Cys-1082. Catalysis depends on Cys-1376, which acts as the Phosphocysteine intermediate.

It belongs to the protein-tyrosine phosphatase family. Receptor class 2B subfamily. Post-translationally, this protein undergoes proteolytic processing. As to expression, high levels in lung, brain and colon; less in liver, pancreas, stomach, kidney, placenta and mammary carcinoma.

The protein localises to the cell junction. It localises to the adherens junction. It is found in the cell membrane. It carries out the reaction O-phospho-L-tyrosyl-[protein] + H2O = L-tyrosyl-[protein] + phosphate. Regulation of processes involving cell contact and adhesion such as growth control, tumor invasion, and metastasis. Negative regulator of EGFR signaling pathway. Forms complexes with beta-catenin and gamma-catenin/plakoglobin. Beta-catenin may be a substrate for the catalytic activity of PTPRK/PTP-kappa. The sequence is that of Receptor-type tyrosine-protein phosphatase kappa (PTPRK) from Homo sapiens (Human).